Consider the following 372-residue polypeptide: Queuine tRNA-ribosyltransferase (372 aa).

Asp-89 functions as the Proton acceptor in the catalytic mechanism. Residues 89 to 93 (DSGGF), Asp-161, and Gly-232 each bind substrate. The segment at 262–268 (GIGDLPS) is RNA binding. The active-site Nucleophile is Asp-281. The RNA binding; important for wobble base 34 recognition stretch occupies residues 286–290 (TKAAR). The Zn(2+) site is built by Cys-319, Cys-321, Cys-324, and His-351.

This sequence belongs to the queuine tRNA-ribosyltransferase family. As to quaternary structure, homodimer. Within each dimer, one monomer is responsible for RNA recognition and catalysis, while the other monomer binds to the replacement base PreQ1. It depends on Zn(2+) as a cofactor.

It catalyses the reaction 7-aminomethyl-7-carbaguanine + guanosine(34) in tRNA = 7-aminomethyl-7-carbaguanosine(34) in tRNA + guanine. It functions in the pathway tRNA modification; tRNA-queuosine biosynthesis. Catalyzes the base-exchange of a guanine (G) residue with the queuine precursor 7-aminomethyl-7-deazaguanine (PreQ1) at position 34 (anticodon wobble position) in tRNAs with GU(N) anticodons (tRNA-Asp, -Asn, -His and -Tyr). Catalysis occurs through a double-displacement mechanism. The nucleophile active site attacks the C1' of nucleotide 34 to detach the guanine base from the RNA, forming a covalent enzyme-RNA intermediate. The proton acceptor active site deprotonates the incoming PreQ1, allowing a nucleophilic attack on the C1' of the ribose to form the product. After dissociation, two additional enzymatic reactions on the tRNA convert PreQ1 to queuine (Q), resulting in the hypermodified nucleoside queuosine (7-(((4,5-cis-dihydroxy-2-cyclopenten-1-yl)amino)methyl)-7-deazaguanosine). The protein is Queuine tRNA-ribosyltransferase of Chlamydia muridarum (strain MoPn / Nigg).